A 285-amino-acid polypeptide reads, in one-letter code: Bifunctional protein FolD (285 aa).

Residues 166–168 (GRS), Ser-191, and Thr-232 contribute to the NADP(+) site.

The protein belongs to the tetrahydrofolate dehydrogenase/cyclohydrolase family. In terms of assembly, homodimer.

The enzyme catalyses (6R)-5,10-methylene-5,6,7,8-tetrahydrofolate + NADP(+) = (6R)-5,10-methenyltetrahydrofolate + NADPH. The catalysed reaction is (6R)-5,10-methenyltetrahydrofolate + H2O = (6R)-10-formyltetrahydrofolate + H(+). It participates in one-carbon metabolism; tetrahydrofolate interconversion. Catalyzes the oxidation of 5,10-methylenetetrahydrofolate to 5,10-methenyltetrahydrofolate and then the hydrolysis of 5,10-methenyltetrahydrofolate to 10-formyltetrahydrofolate. This is Bifunctional protein FolD from Chloroflexus aurantiacus (strain ATCC 29366 / DSM 635 / J-10-fl).